A 1032-amino-acid chain; its full sequence is Probable LRR receptor-like serine/threonine-protein kinase At1g56130 (1032 aa).

The N-terminal stretch at 1 to 29 (MTRIRRSPCLLLLIIWFMCIAGSVQVVQS) is a signal peptide. Residues 30 to 636 (QNQTGATTHP…PPSKGKNRTG (607 aa)) are Extracellular-facing. N31, N61, and N95 each carry an N-linked (GlcNAc...) asparagine glycan. LRR repeat units follow at residues 101–122 (ITNI…LWTL), 123–146 (TYLT…IGNL), 148–170 (RMQW…IGLL), 171–194 (TDLR…IGRC), 196–217 (KLQQ…SFAN), 242–265 (WTKL…SFSN), 290–314 (MKSL…IGEH), 315–338 (SSLR…LFNL), 340–360 (QLTH…TQKT), and 361–385 (QSLR…SLPS). N145 carries an N-linked (GlcNAc...) asparagine glycan. A glycan (N-linked (GlcNAc...) asparagine) is linked at N182. Residues N265, N302, N337, N348, and N352 are each glycosylated (N-linked (GlcNAc...) asparagine). N-linked (GlcNAc...) asparagine glycosylation is found at N394, N580, and N633. Residues 637-657 (TIVGVIVGVGLLSILAGVVMF) form a helical membrane-spanning segment. Residues 658–1032 (TIRKRRKRYT…MLGSKINEGR (375 aa)) lie on the Cytoplasmic side of the membrane. T683 carries the post-translational modification Phosphothreonine. Positions 694-968 (FDPSNKLGEG…VAMLSGDVEI (275 aa)) constitute a Protein kinase domain. ATP-binding positions include 700–708 (LGEGGFGPV) and K722. Y767 carries the post-translational modification Phosphotyrosine. Residue D818 is the Proton acceptor of the active site. Residues S822 and S851 each carry the phosphoserine modification. Residues T852 and T857 each carry the phosphothreonine modification. Phosphotyrosine is present on Y865. A disordered region spans residues 1008 to 1032 (APGSEISPRDSDFKPMLGSKINEGR).

It belongs to the protein kinase superfamily. Ser/Thr protein kinase family.

It localises to the cell membrane. It catalyses the reaction L-seryl-[protein] + ATP = O-phospho-L-seryl-[protein] + ADP + H(+). The enzyme catalyses L-threonyl-[protein] + ATP = O-phospho-L-threonyl-[protein] + ADP + H(+). This chain is Probable LRR receptor-like serine/threonine-protein kinase At1g56130, found in Arabidopsis thaliana (Mouse-ear cress).